A 197-amino-acid polypeptide reads, in one-letter code: ATP-dependent Clp protease proteolytic subunit 2 (197 aa).

S101 functions as the Nucleophile in the catalytic mechanism. Residue H126 is part of the active site.

This sequence belongs to the peptidase S14 family. Fourteen ClpP subunits assemble into 2 heptameric rings which stack back to back to give a disk-like structure with a central cavity, resembling the structure of eukaryotic proteasomes.

It localises to the cytoplasm. It carries out the reaction Hydrolysis of proteins to small peptides in the presence of ATP and magnesium. alpha-casein is the usual test substrate. In the absence of ATP, only oligopeptides shorter than five residues are hydrolyzed (such as succinyl-Leu-Tyr-|-NHMec, and Leu-Tyr-Leu-|-Tyr-Trp, in which cleavage of the -Tyr-|-Leu- and -Tyr-|-Trp bonds also occurs).. Its function is as follows. Cleaves peptides in various proteins in a process that requires ATP hydrolysis. Has a chymotrypsin-like activity. Plays a major role in the degradation of misfolded proteins. This chain is ATP-dependent Clp protease proteolytic subunit 2, found in Trichormus variabilis (strain ATCC 29413 / PCC 7937) (Anabaena variabilis).